We begin with the raw amino-acid sequence, 686 residues long: Cyclic nucleotide-gated channel alpha-1 (686 aa).

Over 1 to 165 (MKNNIINTQQ…PSGNTYYNWL (165 aa)) the chain is Cytoplasmic. Disordered regions lie at residues 31 to 75 (ENGA…PSQR) and 87 to 149 (NVNN…EEKK). Positions 39-53 (SEDDDSASTSEESEN) are enriched in acidic residues. Basic and acidic residues predominate over residues 110–124 (SKSDDKNENKNDPEK). Residues 125–134 (KKKKKDKEKK) are compositionally biased toward basic residues. The segment covering 135–149 (KKEEKSKDKKEEEKK) has biased composition (basic and acidic residues). Residues 166–187 (FCITLPVMYNWTMVIARACFDE) form a helical membrane-spanning segment. Over 188–197 (LQSDYLEYWL) the chain is Extracellular. The chain crosses the membrane as a helical span at residues 198–218 (ILDYVSDIVYLIDMFVRTRTG). At 219-243 (YLEQGLLVKEELKLINKYKSNLQFK) the chain is on the cytoplasmic side. Residues 244–262 (LDVLSLIPTDLLYFKLGWN) form a helical membrane-spanning segment. Topologically, residues 263 to 267 (YPEIR) are extracellular. Residues 268–286 (LNRLLRFSRMFEFFQRTET) form a helical membrane-spanning segment. The Cytoplasmic segment spans residues 287–293 (RTNYPNI). An ion conduction pathway region spans residues 291-399 (PNIFRISNLV…GNIGSMISNM (109 aa)). Residues 294-317 (FRISNLVMYIVIIIHWNACVFYSI) form a helical membrane-spanning segment. Residues 318–340 (SKAIGFGNDTWVYPDINDPEFGR) are Extracellular-facing. Asn-325 carries an N-linked (GlcNAc...) asparagine glycan. The next 2 helical transmembrane spans lie at 341–375 (LARK…VFVV) and 376–400 (VDFL…SNMN). A selectivity filter region spans residues 358–361 (TIGE). The segment at 401-477 (AARAEFQARI…DTLKKVRIFA (77 aa)) is C-linker. The Cytoplasmic segment spans residues 401-686 (AARAEFQARI…GAESGPIDST (286 aa)). The cyclic nucleotide-binding domain stretch occupies residues 481 to 601 (AGLLVELVLK…EEKGKQILMK (121 aa)). Positions 541, 544, 557, and 558 each coordinate 3',5'-cyclic GMP. The 3',5'-cyclic AMP site is built by Arg-557 and Thr-558. A coiled-coil region spans residues 619–673 (LEEKVTRMEGSVDLLQTRFARILAEYESMQQKLKQRLTKVEKFLKPLIDTEFSSI).

Belongs to the cyclic nucleotide-gated cation channel (TC 1.A.1.5) family. CNGA1 subfamily. Forms heterotetrameric channels composed of CNGA1 and CNGB1 subunits with 3:1 stoichiometry. May also form cyclic nucleotide-activated homotetrameric channels, that are efficiently activated by saturating cGMP, but poorly activated by saturating cAMP compared to the heterotetramer with CNGB1. The channel binds Ca(2+)-bound CALM1 via CaM1 and CaM2 regions of the CNGB1 subunit; this interaction modulates the affinity of the channel for cNMPs in response to intracellular Ca(2+) levels. As to expression, rod cells in the retina.

It localises to the cell membrane. It catalyses the reaction Ca(2+)(in) = Ca(2+)(out). It carries out the reaction Na(+)(in) = Na(+)(out). The catalysed reaction is K(+)(in) = K(+)(out). The enzyme catalyses NH4(+)(in) = NH4(+)(out). It catalyses the reaction Rb(+)(in) = Rb(+)(out). It carries out the reaction Li(+)(in) = Li(+)(out). The catalysed reaction is Cs(+)(in) = Cs(+)(out). Its activity is regulated as follows. Channel opening is activated by cGMP and at a much lesser extent by cAMP. Ca(2+) binding concominantly blocks monovalent cation currents. Inhibited by L-cis-diltiazem. Pore-forming subunit of the rod cyclic nucleotide-gated channel. Mediates rod photoresponses at dim light converting transient changes in intracellular cGMP levels into electrical signals. In the dark, cGMP levels are high and keep the channel open enabling a steady inward current carried by Na(+) and Ca(2+) ions that leads to membrane depolarization and neurotransmitter release from synaptic terminals. Upon photon absorption cGMP levels decline leading to channel closure and membrane hyperpolarization that ultimately slows neurotransmitter release and signals the presence of light, the end point of the phototransduction cascade. Conducts cGMP- and cAMP-gated ion currents, with permeability for monovalent and divalent cations. The selectivity for Ca(2+) over Na(+) increases with cGMP concentrations, whereas the selectivity among monovalent ions is independent of the cGMP levels. The protein is Cyclic nucleotide-gated channel alpha-1 of Homo sapiens (Human).